Here is a 456-residue protein sequence, read N- to C-terminus: Alcohol acyltransferase 17 (456 aa).

Active-site proton acceptor residues include His166 and Asp382.

The protein belongs to the plant acyltransferase family. Expressed in fruit.

Its function is as follows. Involved in the biosynthesis of volatile esters which confer kiwifruit flavor. Alcohol acyl transferase that can use a wide range of alcohols as substrate to produce esters. The chain is Alcohol acyltransferase 17 from Actinidia deliciosa (Kiwi).